A 403-amino-acid chain; its full sequence is 4-hydroxyphenylpyruvate dioxygenase (403 aa).

VOC domains are found at residues 25–169 (GYDH…LVER) and 201–359 (RIDH…LFTK). Positions 204, 287, and 370 each coordinate Fe cation.

It belongs to the 4HPPD family. As to quaternary structure, homodimer. The cofactor is Fe cation.

The catalysed reaction is 3-(4-hydroxyphenyl)pyruvate + O2 = homogentisate + CO2. It functions in the pathway amino-acid degradation; L-phenylalanine degradation; acetoacetate and fumarate from L-phenylalanine: step 3/6. Its function is as follows. 4-hydroxyphenylpyruvate dioxygenase; part of the L-tyrosine degradation gene cluster that mediates the biosynthesis of the brownish pigment pyomelanin as an alternative melanin. The 4-hydroxyphenylpyruvate dioxygenase hppD catalyzes the conversion of 4-hydroxyphenylpyruvate to homogentisic acid (HGA). The protein hmgX is crucial for this conversion and thus, probably functions as an accessory factor to mediate specific activity of hppD. The homogentisate 1,2-dioxygenase hmgA is then involved in the cleavage of the aromatic ring of HGA and its conversion to 4-maleylacetoacetate. When hmgA activity is lowered by the cell wall integrity (CWI) signaling pathway, HGA accumulates and leads to the production of pyomelanin through benzoquinone acetic acid after oxidation and polymerization. On the opposite, in non-stress conditions, both hppD and hmgA activities are balanced and HGA is degraded into 4-maleylacetoacetate. 4-maleylacetoacetate is further converted to 4-fumarylacetoacetate by the maleylacetoacetate isomerase maiA, which is degraded into fumarate and acetoacetate by the fumarylacetoacetase fahA. This Aspergillus fumigatus (strain ATCC MYA-4609 / CBS 101355 / FGSC A1100 / Af293) (Neosartorya fumigata) protein is 4-hydroxyphenylpyruvate dioxygenase.